Reading from the N-terminus, the 197-residue chain is MNILIIFASYLLGSLPTGFLIGKYLKNIDLRTIGSGSTGATNVLRNVGKWPALFVFIIDVGKGFIAVKIAQYYTDQELIEVIAGISAISGHIWPIWLGGKGGKAVATGLGMFLALSWKVGLASLGIFLIVLTKTKFVSLSSISAAILLPIFMFFYLGEFIHTYFFISLIVALLVIWKHRTNITRLIKGEESKINQNQ.

Transmembrane regions (helical) follow at residues 1-21 (MNIL…GFLI), 78-98 (LIEV…IWLG), 111-131 (MFLA…LIVL), 136-155 (FVSL…MFFY), and 159-176 (FIHT…LVIW).

Belongs to the PlsY family. In terms of assembly, probably interacts with PlsX.

Its subcellular location is the cell inner membrane. It catalyses the reaction an acyl phosphate + sn-glycerol 3-phosphate = a 1-acyl-sn-glycero-3-phosphate + phosphate. The protein operates within lipid metabolism; phospholipid metabolism. Catalyzes the transfer of an acyl group from acyl-phosphate (acyl-PO(4)) to glycerol-3-phosphate (G3P) to form lysophosphatidic acid (LPA). This enzyme utilizes acyl-phosphate as fatty acyl donor, but not acyl-CoA or acyl-ACP. The protein is Glycerol-3-phosphate acyltransferase of Prochlorococcus marinus (strain MIT 9215).